Consider the following 533-residue polypeptide: MWLELGAMLRRTCGPLGRAVRLPCGGALGPRPHWWGPCRSCLAQSVHQDQPGRGLSEDDIRRAREARLRKAPRPQLSDRSRERKVPASRISRLASFGGLAVGLGLGALAEVTKKSLPGGSLQHEGVSGLGSSPFLSEANAERIVQTLCTVRGAALKIGQMLSIQDNSFISPQLQRIFERVRQSADFMPRWQMMRVLEEELGKDWQDKVASLEEVPFAAASIGQVHQGLLKDGTEVAVKIQYPGVAQSIQSDVENLLALLKMSVGLPEGLFAEQSLQTLQQELAWECDYRREAACAQTFRKLLADDPFFRVPAVVQELCTTRVLGMELAGGIPLDQCQGLSQDIRNQICFQLLRLCLRELFEFRFMQTDPNWANFLYDASSHQVTLLDFGASRAFGTEFTDHYIEVVKAAADGDRDRVLQKSQDLKFLTGFETKAFSDAHVEAVMILGEPFAASGPYDFGAGETARRIQGLIPVLLRHRLRPPPEETYALHRKLAGAFLACARLHAHIACRDLFQDTYHRYWASRQTLPLPAAS.

The helical transmembrane segment at 93–109 threads the bilayer; the sequence is LASFGGLAVGLGLGALA. The KxGQ motif signature appears at 156–159; it reads KIGQ. A Protein kinase domain is found at 192–424; that stretch reads MMRVLEEELG…DRVLQKSQDL (233 aa). Positions 217–220 match the AAAS motif motif; the sequence is AAAS. Residues Ser220, Lys238, and 325 to 328 each bind ATP; that span reads MELA. The Proton acceptor role is filled by Asp368. ATP is bound by residues Asn373 and Asp387.

The protein belongs to the protein kinase superfamily. ADCK protein kinase family. In terms of assembly, homodimer; homodimerizes via its transmembrane region. Interacts with COQ6 and COQ7. Interacts with the multi-subunit COQ enzyme complex, composed of at least COQ3, COQ4, COQ5, COQ6, COQ7 and COQ9.

It is found in the mitochondrion membrane. It localises to the cytoplasm. The protein localises to the cytosol. The protein resides in the cell membrane. It participates in cofactor biosynthesis; ubiquinone biosynthesis. Atypical kinase involved in the biosynthesis of coenzyme Q, also named ubiquinone, an essential lipid-soluble electron transporter for aerobic cellular respiration. Its substrate specificity is still unclear: may act as a protein kinase that mediates phosphorylation of COQ3. According to other reports, acts as a small molecule kinase, possibly a lipid kinase that phosphorylates a prenyl lipid in the ubiquinone biosynthesis pathway, as suggested by its ability to bind coenzyme Q lipid intermediates. However, the small molecule kinase activity was not confirmed by another publication. Required for podocyte migration. The sequence is that of Atypical kinase COQ8B, mitochondrial from Mus musculus (Mouse).